The primary structure comprises 202 residues: Cytochrome c oxidase assembly protein CtaG (202 aa).

Over 1-13 (MSDKAAAPKKQGR) the chain is Cytoplasmic. Residues 14 to 36 (NNGAVVLMCLSFVFGMGAMSYAA) form a helical; Signal-anchor for type II membrane protein membrane-spanning segment. At 37–202 (VPLYRIFCQV…GGAEKVEKKL (166 aa)) the chain is on the periplasmic side. The tract at residues 183-202 (EGPKPLASNEGGAEKVEKKL) is disordered.

This sequence belongs to the COX11/CtaG family.

It localises to the cell inner membrane. In terms of biological role, exerts its effect at some terminal stage of cytochrome c oxidase synthesis, probably by being involved in the insertion of the copper B into subunit I. This is Cytochrome c oxidase assembly protein CtaG from Rhizobium etli (strain CIAT 652).